Consider the following 64-residue polypeptide: Large ribosomal subunit protein bL35 (64 aa).

Residues M1–K54 are disordered. A compositionally biased stretch (basic residues) spans K12–R44.

Belongs to the bacterial ribosomal protein bL35 family.

The sequence is that of Large ribosomal subunit protein bL35 from Chromohalobacter salexigens (strain ATCC BAA-138 / DSM 3043 / CIP 106854 / NCIMB 13768 / 1H11).